The sequence spans 248 residues: tRNA1(Val) (adenine(37)-N6)-methyltransferase (248 aa).

This sequence belongs to the methyltransferase superfamily. tRNA (adenine-N(6)-)-methyltransferase family.

The protein resides in the cytoplasm. It catalyses the reaction adenosine(37) in tRNA1(Val) + S-adenosyl-L-methionine = N(6)-methyladenosine(37) in tRNA1(Val) + S-adenosyl-L-homocysteine + H(+). Functionally, specifically methylates the adenine in position 37 of tRNA(1)(Val) (anticodon cmo5UAC). This is tRNA1(Val) (adenine(37)-N6)-methyltransferase from Musicola paradisiaca (strain Ech703) (Dickeya paradisiaca).